The primary structure comprises 335 residues: Mesoderm-specific transcript protein (335 aa).

2 helical membrane-spanning segments follow: residues 13-33 (WWVQVGLLAVPLLAAYLHIPP) and 63-83 (VGVVGSPEIVVLLHGFPTSSY). One can recognise an AB hydrolase-1 domain in the interval 71-310 (IVVLLHGFPT…PRSTVSILDD (240 aa)). The RVIALD signature appears at 98-103 (RVIALD). N163 is a glycosylation site (N-linked (GlcNAc...) asparagine). The chain crosses the membrane as a helical span at residues 266 to 286 (VGALASVSIPIHFIYGPLDPI).

This sequence belongs to the AB hydrolase superfamily. As to expression, expressed in mesodermal tissues. Isoform 1 is exclusively expressed from the paternal allele in all fetal tissues and cell lines examined, whereas isoform 2 is preferentially expressed from the paternal allele in a tissue-type-specific manner.

Its subcellular location is the endoplasmic reticulum membrane. The protein is Mesoderm-specific transcript protein (Mest) of Mus musculus (Mouse).